The primary structure comprises 204 residues: UPF0637 protein lwe1043 (204 aa).

This sequence belongs to the UPF0637 family.

The polypeptide is UPF0637 protein lwe1043 (Listeria welshimeri serovar 6b (strain ATCC 35897 / DSM 20650 / CCUG 15529 / CIP 8149 / NCTC 11857 / SLCC 5334 / V8)).